The sequence spans 206 residues: Large ribosomal subunit protein uL4 (206 aa).

It belongs to the universal ribosomal protein uL4 family. As to quaternary structure, part of the 50S ribosomal subunit.

In terms of biological role, one of the primary rRNA binding proteins, this protein initially binds near the 5'-end of the 23S rRNA. It is important during the early stages of 50S assembly. It makes multiple contacts with different domains of the 23S rRNA in the assembled 50S subunit and ribosome. Forms part of the polypeptide exit tunnel. The sequence is that of Large ribosomal subunit protein uL4 from Cereibacter sphaeroides (strain KD131 / KCTC 12085) (Rhodobacter sphaeroides).